Consider the following 1040-residue polypeptide: Multidrug resistance protein MdtB (1040 aa).

The next 12 membrane-spanning stretches (helical) occupy residues 25 to 45 (LLMA…PVAA), 347 to 367 (LMLA…NIPA), 369 to 389 (IIPG…MVFL), 396 to 416 (LTLM…IVVI), 440 to 460 (IGFT…PLLF), 472 to 492 (FAVT…TLTP), 537 to 557 (WLTL…WIVI), 863 to 883 (LGST…VLGV), 888 to 908 (FIHP…ALLA), 910 to 930 (IIAG…LIGI), 968 to 988 (ILMT…STGV), and 998 to 1018 (IAMV…TPVI).

It belongs to the resistance-nodulation-cell division (RND) (TC 2.A.6) family. MdtB subfamily. As to quaternary structure, part of a tripartite efflux system composed of MdtA, MdtB and MdtC. MdtB forms a heteromultimer with MdtC.

Its subcellular location is the cell inner membrane. This chain is Multidrug resistance protein MdtB, found in Salmonella paratyphi B (strain ATCC BAA-1250 / SPB7).